The sequence spans 322 residues: Deoxyhypusine hydroxylase (322 aa).

Fe cation contacts are provided by H78, E79, H111, and E112. HEAT-like PBS-type repeat units follow at residues 109-135 (VRHE…CLKN), 203-229 (LRYR…GFND), 234-260 (FKHE…VLGR), and 267-293 (VRHE…YLND). Fe cation-binding residues include H236, E237, H269, and E270.

The protein belongs to the deoxyhypusine hydroxylase family. The cofactor is Fe(2+).

It is found in the cytoplasm. It localises to the nucleus. It catalyses the reaction [eIF5A protein]-deoxyhypusine + AH2 + O2 = [eIF5A protein]-hypusine + A + H2O. It participates in protein modification; eIF5A hypusination. Catalyzes the hydroxylation of the N(6)-(4-aminobutyl)-L-lysine intermediate to form hypusine, an essential post-translational modification only found in mature eIF-5A factor. This chain is Deoxyhypusine hydroxylase, found in Candida glabrata (strain ATCC 2001 / BCRC 20586 / JCM 3761 / NBRC 0622 / NRRL Y-65 / CBS 138) (Yeast).